A 478-amino-acid polypeptide reads, in one-letter code: Protein WVD2-like 7 (478 aa).

2 disordered regions span residues aspartate 201–threonine 326 and proline 385–isoleucine 420. A compositionally biased stretch (basic and acidic residues) spans alanine 208–serine 217. Composition is skewed to polar residues over residues lysine 219–asparagine 232 and glycine 264–alanine 277. The span at lysine 278–isoleucine 289 shows a compositional bias: basic and acidic residues. 2 stretches are compositionally biased toward polar residues: residues arginine 309–threonine 326 and valine 407–isoleucine 420.

The protein belongs to the TPX2 family. Expressed in seedlings.

The protein resides in the cytoplasm. It localises to the cytoskeleton. Its function is as follows. Microtubule-associated protein (MAP) that regulates the orientation of interphase cortical microtubules. The protein is Protein WVD2-like 7 of Arabidopsis thaliana (Mouse-ear cress).